Reading from the N-terminus, the 340-residue chain is Holliday junction branch migration complex subunit RuvB (340 aa).

Positions 1–183 (MKRDDLVSPE…FGISFRLDYY (183 aa)) are large ATPase domain (RuvB-L). Residues Leu-22, Arg-23, Gly-64, Lys-67, Thr-68, Thr-69, 130-132 (EDF), Arg-173, Tyr-183, and Arg-220 contribute to the ATP site. Thr-68 is a binding site for Mg(2+). The segment at 184–254 (AVEELTKIIN…VAVHALEMLE (71 aa)) is small ATPAse domain (RuvB-S). Residues 257-340 (DRGFDQMDRS…KFEVGQKELF (84 aa)) are head domain (RuvB-H). Positions 312 and 317 each coordinate DNA.

It belongs to the RuvB family. As to quaternary structure, homohexamer. Forms an RuvA(8)-RuvB(12)-Holliday junction (HJ) complex. HJ DNA is sandwiched between 2 RuvA tetramers; dsDNA enters through RuvA and exits via RuvB. An RuvB hexamer assembles on each DNA strand where it exits the tetramer. Each RuvB hexamer is contacted by two RuvA subunits (via domain III) on 2 adjacent RuvB subunits; this complex drives branch migration. In the full resolvosome a probable DNA-RuvA(4)-RuvB(12)-RuvC(2) complex forms which resolves the HJ.

It is found in the cytoplasm. The enzyme catalyses ATP + H2O = ADP + phosphate + H(+). Functionally, the RuvA-RuvB-RuvC complex processes Holliday junction (HJ) DNA during genetic recombination and DNA repair, while the RuvA-RuvB complex plays an important role in the rescue of blocked DNA replication forks via replication fork reversal (RFR). RuvA specifically binds to HJ cruciform DNA, conferring on it an open structure. The RuvB hexamer acts as an ATP-dependent pump, pulling dsDNA into and through the RuvAB complex. RuvB forms 2 homohexamers on either side of HJ DNA bound by 1 or 2 RuvA tetramers; 4 subunits per hexamer contact DNA at a time. Coordinated motions by a converter formed by DNA-disengaged RuvB subunits stimulates ATP hydrolysis and nucleotide exchange. Immobilization of the converter enables RuvB to convert the ATP-contained energy into a lever motion, pulling 2 nucleotides of DNA out of the RuvA tetramer per ATP hydrolyzed, thus driving DNA branch migration. The RuvB motors rotate together with the DNA substrate, which together with the progressing nucleotide cycle form the mechanistic basis for DNA recombination by continuous HJ branch migration. Branch migration allows RuvC to scan DNA until it finds its consensus sequence, where it cleaves and resolves cruciform DNA. The protein is Holliday junction branch migration complex subunit RuvB of Syntrophus aciditrophicus (strain SB).